We begin with the raw amino-acid sequence, 226 residues long: Enolase-phosphatase E1 (226 aa).

The protein belongs to the HAD-like hydrolase superfamily. MasA/MtnC family. In terms of assembly, monomer. The cofactor is Mg(2+).

It catalyses the reaction 5-methylsulfanyl-2,3-dioxopentyl phosphate + H2O = 1,2-dihydroxy-5-(methylsulfanyl)pent-1-en-3-one + phosphate. The protein operates within amino-acid biosynthesis; L-methionine biosynthesis via salvage pathway; L-methionine from S-methyl-5-thio-alpha-D-ribose 1-phosphate: step 3/6. It functions in the pathway amino-acid biosynthesis; L-methionine biosynthesis via salvage pathway; L-methionine from S-methyl-5-thio-alpha-D-ribose 1-phosphate: step 4/6. Bifunctional enzyme that catalyzes the enolization of 2,3-diketo-5-methylthiopentyl-1-phosphate (DK-MTP-1-P) into the intermediate 2-hydroxy-3-keto-5-methylthiopentenyl-1-phosphate (HK-MTPenyl-1-P), which is then dephosphorylated to form the acireductone 1,2-dihydroxy-3-keto-5-methylthiopentene (DHK-MTPene). This chain is Enolase-phosphatase E1, found in Shewanella putrefaciens (strain CN-32 / ATCC BAA-453).